Consider the following 471-residue polypeptide: Ribulose bisphosphate carboxylase large chain (471 aa).

Lysine 5 bears the N6,N6,N6-trimethyllysine mark. Substrate contacts are provided by asparagine 114 and threonine 164. The active-site Proton acceptor is lysine 166. Lysine 168 lines the substrate pocket. Mg(2+) is bound by residues lysine 192, aspartate 194, and glutamate 195. Lysine 192 is subject to N6-carboxylysine. The active-site Proton acceptor is the histidine 285. Substrate-binding residues include arginine 286, histidine 318, and serine 370.

This sequence belongs to the RuBisCO large chain family. Type I subfamily. Heterohexadecamer of 8 large chains and 8 small chains; disulfide-linked. The disulfide link is formed within the large subunit homodimers. Mg(2+) serves as cofactor. In terms of processing, the disulfide bond which can form in the large chain dimeric partners within the hexadecamer appears to be associated with oxidative stress and protein turnover.

The protein resides in the plastid. It localises to the chloroplast. It catalyses the reaction 2 (2R)-3-phosphoglycerate + 2 H(+) = D-ribulose 1,5-bisphosphate + CO2 + H2O. The catalysed reaction is D-ribulose 1,5-bisphosphate + O2 = 2-phosphoglycolate + (2R)-3-phosphoglycerate + 2 H(+). Its function is as follows. RuBisCO catalyzes two reactions: the carboxylation of D-ribulose 1,5-bisphosphate, the primary event in carbon dioxide fixation, as well as the oxidative fragmentation of the pentose substrate in the photorespiration process. Both reactions occur simultaneously and in competition at the same active site. This chain is Ribulose bisphosphate carboxylase large chain, found in Deppea grandiflora.